Here is a 617-residue protein sequence, read N- to C-terminus: Chaperone protein HscA homolog (617 aa).

This sequence belongs to the heat shock protein 70 family.

In terms of biological role, probable chaperone. Has a low intrinsic ATPase activity which is markedly stimulated by HscB. In Vibrio vulnificus (strain CMCP6), this protein is Chaperone protein HscA homolog.